Reading from the N-terminus, the 680-residue chain is Oligopeptidase A (680 aa).

Residue H469 participates in Zn(2+) binding. E470 is a catalytic residue. H473 and H476 together coordinate Zn(2+).

Belongs to the peptidase M3 family. It depends on Zn(2+) as a cofactor.

It catalyses the reaction Hydrolysis of oligopeptides, with broad specificity. Gly or Ala commonly occur as P1 or P1' residues, but more distant residues are also important, as is shown by the fact that Z-Gly-Pro-Gly-|-Gly-Pro-Ala is cleaved, but not Z-(Gly)(5).. Its function is as follows. May play a specific role in the degradation of signal peptides after they are released from precursor forms of secreted proteins. Can cleave N-acetyl-L-Ala(4). The protein is Oligopeptidase A (prlC) of Escherichia coli (strain K12).